The chain runs to 420 residues: DNA repair protein RadA (420 aa).

ATP is bound at residue 62–69 (GDPGIGKS). A RadA KNRFG motif motif is present at residues 218 to 222 (KNRFG). Positions 317-420 (DAYLKSAGGV…IQEVLKKVFA (104 aa)) are lon-protease-like.

Belongs to the RecA family. RadA subfamily.

Its function is as follows. Plays a role in repairing double-strand DNA breaks, probably involving stabilizing or processing branched DNA or blocked replication forks. Required for efficient transformation with chromosomal (linear) DNA, but not for replicative plasmid DNA. Its increased sensitivity to a DNA damaging agent suggests it may be required for DNA repair. The protein is DNA repair protein RadA of Streptococcus pneumoniae (strain ATCC BAA-255 / R6).